A 250-amino-acid chain; its full sequence is Octanoyltransferase (250 aa).

The region spanning 44-224 (GAGSDRLLLL…AVVQALNGDL (181 aa)) is the BPL/LPL catalytic domain. Substrate-binding positions include 82 to 89 (RGGKITWH), 154 to 156 (AIG), and 167 to 169 (GIS). C185 (acyl-thioester intermediate) is an active-site residue. Residues 224–250 (LPVRDHDLPRPGTTPAAPNSTRVRSMT) are disordered. Residues 239–250 (AAPNSTRVRSMT) show a composition bias toward polar residues.

The protein belongs to the LipB family.

Its subcellular location is the cytoplasm. The enzyme catalyses octanoyl-[ACP] + L-lysyl-[protein] = N(6)-octanoyl-L-lysyl-[protein] + holo-[ACP] + H(+). It participates in protein modification; protein lipoylation via endogenous pathway; protein N(6)-(lipoyl)lysine from octanoyl-[acyl-carrier-protein]: step 1/2. Its function is as follows. Catalyzes the transfer of endogenously produced octanoic acid from octanoyl-acyl-carrier-protein onto the lipoyl domains of lipoate-dependent enzymes. Lipoyl-ACP can also act as a substrate although octanoyl-ACP is likely to be the physiological substrate. The polypeptide is Octanoyltransferase (Nocardia farcinica (strain IFM 10152)).